The primary structure comprises 289 residues: tRNA(Ile)-lysidine synthase (289 aa).

Residue 11–16 (SGGPDS) coordinates ATP.

The protein belongs to the tRNA(Ile)-lysidine synthase family.

Its subcellular location is the cytoplasm. The enzyme catalyses cytidine(34) in tRNA(Ile2) + L-lysine + ATP = lysidine(34) in tRNA(Ile2) + AMP + diphosphate + H(+). Functionally, ligates lysine onto the cytidine present at position 34 of the AUA codon-specific tRNA(Ile) that contains the anticodon CAU, in an ATP-dependent manner. Cytidine is converted to lysidine, thus changing the amino acid specificity of the tRNA from methionine to isoleucine. This chain is tRNA(Ile)-lysidine synthase, found in Mycoplasma pneumoniae (strain ATCC 29342 / M129 / Subtype 1) (Mycoplasmoides pneumoniae).